The following is a 362-amino-acid chain: Phosphoserine aminotransferase (362 aa).

Residue Arg-43 coordinates L-glutamate. Residues 77 to 78, Trp-103, Thr-153, Asp-173, and Gln-196 each bind pyridoxal 5'-phosphate; that span reads AR. Lys-197 carries the N6-(pyridoxal phosphate)lysine modification.

The protein belongs to the class-V pyridoxal-phosphate-dependent aminotransferase family. SerC subfamily. Homodimer. It depends on pyridoxal 5'-phosphate as a cofactor.

The protein resides in the cytoplasm. It carries out the reaction O-phospho-L-serine + 2-oxoglutarate = 3-phosphooxypyruvate + L-glutamate. The catalysed reaction is 4-(phosphooxy)-L-threonine + 2-oxoglutarate = (R)-3-hydroxy-2-oxo-4-phosphooxybutanoate + L-glutamate. Its pathway is amino-acid biosynthesis; L-serine biosynthesis; L-serine from 3-phospho-D-glycerate: step 2/3. It participates in cofactor biosynthesis; pyridoxine 5'-phosphate biosynthesis; pyridoxine 5'-phosphate from D-erythrose 4-phosphate: step 3/5. In terms of biological role, catalyzes the reversible conversion of 3-phosphohydroxypyruvate to phosphoserine and of 3-hydroxy-2-oxo-4-phosphonooxybutanoate to phosphohydroxythreonine. This chain is Phosphoserine aminotransferase, found in Legionella pneumophila subsp. pneumophila (strain Philadelphia 1 / ATCC 33152 / DSM 7513).